The sequence spans 69 residues: Large ribosomal subunit protein bL28 (69 aa).

It belongs to the bacterial ribosomal protein bL28 family.

The polypeptide is Large ribosomal subunit protein bL28 (Nitratidesulfovibrio vulgaris (strain DSM 19637 / Miyazaki F) (Desulfovibrio vulgaris)).